Reading from the N-terminus, the 231-residue chain is Large ribosomal subunit protein uL1 (231 aa).

This sequence belongs to the universal ribosomal protein uL1 family. Part of the 50S ribosomal subunit.

Binds directly to 23S rRNA. The L1 stalk is quite mobile in the ribosome, and is involved in E site tRNA release. Functionally, protein L1 is also a translational repressor protein, it controls the translation of the L11 operon by binding to its mRNA. This is Large ribosomal subunit protein uL1 from Ruthia magnifica subsp. Calyptogena magnifica.